The primary structure comprises 195 residues: Probable GTP-binding protein EngB (195 aa).

Residues 24 to 195 (DWPEIALAGR…EAWEAILRYL (172 aa)) form the EngB-type G domain. GTP is bound by residues 32 to 39 (GRSNVGKS), 59 to 63 (GKTQL), 77 to 80 (DVPG), 144 to 147 (TKAD), and 176 to 178 (FSS). Mg(2+) is bound by residues Ser-39 and Thr-61.

It belongs to the TRAFAC class TrmE-Era-EngA-EngB-Septin-like GTPase superfamily. EngB GTPase family. Requires Mg(2+) as cofactor.

Functionally, necessary for normal cell division and for the maintenance of normal septation. The chain is Probable GTP-binding protein EngB from Lactococcus lactis subsp. lactis (strain IL1403) (Streptococcus lactis).